We begin with the raw amino-acid sequence, 128 residues long: Kinase-associated lipoprotein B (128 aa).

A signal peptide spans M1 to A25. C26 is lipidated: N-palmitoyl cysteine. C26 is lipidated: S-diacylglycerol cysteine.

It is found in the cell membrane. Functionally, may play a role in the activation or the expression of KinB. The chain is Kinase-associated lipoprotein B (kapB) from Bacillus subtilis (strain 168).